The primary structure comprises 526 residues: Bifunctional purine biosynthesis protein PurH (526 aa).

One can recognise an MGS-like domain in the interval 1–147; it reads MTKIERALIS…KNWAHVAIVT (147 aa).

Belongs to the PurH family.

It carries out the reaction (6R)-10-formyltetrahydrofolate + 5-amino-1-(5-phospho-beta-D-ribosyl)imidazole-4-carboxamide = 5-formamido-1-(5-phospho-D-ribosyl)imidazole-4-carboxamide + (6S)-5,6,7,8-tetrahydrofolate. The catalysed reaction is IMP + H2O = 5-formamido-1-(5-phospho-D-ribosyl)imidazole-4-carboxamide. It participates in purine metabolism; IMP biosynthesis via de novo pathway; 5-formamido-1-(5-phospho-D-ribosyl)imidazole-4-carboxamide from 5-amino-1-(5-phospho-D-ribosyl)imidazole-4-carboxamide (10-formyl THF route): step 1/1. Its pathway is purine metabolism; IMP biosynthesis via de novo pathway; IMP from 5-formamido-1-(5-phospho-D-ribosyl)imidazole-4-carboxamide: step 1/1. This is Bifunctional purine biosynthesis protein PurH from Laribacter hongkongensis (strain HLHK9).